The chain runs to 388 residues: Carbamoyl phosphate synthase small chain (388 aa).

Positions 1–194 are CPSase; sequence MAQNPLSKPT…WPEGYARQEA (194 aa). L-glutamine-binding residues include Ser-53, Gly-246, and Gly-248. Residues 198-387 enclose the Glutamine amidotransferase type-1 domain; that stretch reads KVVAIDYGAK…AAAMDAQKAE (190 aa). Cys-276 serves as the catalytic Nucleophile. Positions 277, 280, 318, 320, and 321 each coordinate L-glutamine. Residues His-360 and Glu-362 contribute to the active site.

Belongs to the CarA family. As to quaternary structure, composed of two chains; the small (or glutamine) chain promotes the hydrolysis of glutamine to ammonia, which is used by the large (or ammonia) chain to synthesize carbamoyl phosphate. Tetramer of heterodimers (alpha,beta)4.

The catalysed reaction is hydrogencarbonate + L-glutamine + 2 ATP + H2O = carbamoyl phosphate + L-glutamate + 2 ADP + phosphate + 2 H(+). The enzyme catalyses L-glutamine + H2O = L-glutamate + NH4(+). Its pathway is amino-acid biosynthesis; L-arginine biosynthesis; carbamoyl phosphate from bicarbonate: step 1/1. It participates in pyrimidine metabolism; UMP biosynthesis via de novo pathway; (S)-dihydroorotate from bicarbonate: step 1/3. Its function is as follows. Small subunit of the glutamine-dependent carbamoyl phosphate synthetase (CPSase). CPSase catalyzes the formation of carbamoyl phosphate from the ammonia moiety of glutamine, carbonate, and phosphate donated by ATP, constituting the first step of 2 biosynthetic pathways, one leading to arginine and/or urea and the other to pyrimidine nucleotides. The small subunit (glutamine amidotransferase) binds and cleaves glutamine to supply the large subunit with the substrate ammonia. The polypeptide is Carbamoyl phosphate synthase small chain (Ruegeria pomeroyi (strain ATCC 700808 / DSM 15171 / DSS-3) (Silicibacter pomeroyi)).